The sequence spans 147 residues: Nucleoside diphosphate kinase (147 aa).

6 residues coordinate ATP: K11, F59, R87, T93, R104, and N114. The active-site Pros-phosphohistidine intermediate is the H117.

This sequence belongs to the NDK family. As to quaternary structure, homotetramer. Mg(2+) serves as cofactor.

It is found in the cytoplasm. The enzyme catalyses a 2'-deoxyribonucleoside 5'-diphosphate + ATP = a 2'-deoxyribonucleoside 5'-triphosphate + ADP. It catalyses the reaction a ribonucleoside 5'-diphosphate + ATP = a ribonucleoside 5'-triphosphate + ADP. Its function is as follows. Major role in the synthesis of nucleoside triphosphates other than ATP. The ATP gamma phosphate is transferred to the NDP beta phosphate via a ping-pong mechanism, using a phosphorylated active-site intermediate. The polypeptide is Nucleoside diphosphate kinase (Anaeromyxobacter sp. (strain K)).